A 561-amino-acid polypeptide reads, in one-letter code: Oxygen-dependent choline dehydrogenase (561 aa).

An FAD-binding site is contributed by 6–35 (DYIIIGAGSAGNVLATRLTEDADVSVLLLE). Histidine 475 (proton acceptor) is an active-site residue.

The protein belongs to the GMC oxidoreductase family. FAD is required as a cofactor.

It carries out the reaction choline + A = betaine aldehyde + AH2. The catalysed reaction is betaine aldehyde + NAD(+) + H2O = glycine betaine + NADH + 2 H(+). It participates in amine and polyamine biosynthesis; betaine biosynthesis via choline pathway; betaine aldehyde from choline (cytochrome c reductase route): step 1/1. Its function is as follows. Involved in the biosynthesis of the osmoprotectant glycine betaine. Catalyzes the oxidation of choline to betaine aldehyde and betaine aldehyde to glycine betaine at the same rate. This Pseudomonas aeruginosa (strain UCBPP-PA14) protein is Oxygen-dependent choline dehydrogenase.